Here is a 667-residue protein sequence, read N- to C-terminus: YTH domain-containing protein ECT2 (667 aa).

Disordered stretches follow at residues 264 to 305 (QRPV…PSSV) and 379 to 398 (NELN…GNLD). Positions 267–285 (VSGSGVASSYSKSSTVPSS) are enriched in low complexity. The span at 286-305 (RNQNYRSNSHYTSVHQPSSV) shows a compositional bias: polar residues. The region spanning 442–579 (AMFFIIKSYS…EQGLKIVKIF (138 aa)) is the YTH domain. Residues 448–450 (KSY), Asp-454, 464–465 (WA), Asn-497, Trp-521, Trp-526, and Trp-534 each bind RNA. Residues 606–667 (KAKQTQKQVS…VTGDVVANGC (62 aa)) are disordered. Over residues 614-627 (VSEEKVTDEKKESA) the composition is skewed to basic and acidic residues. Positions 628-639 (TAESASKESPAA) are enriched in low complexity.

In terms of assembly, interacts (via C-terminus) with CIPK1. In terms of tissue distribution, expressed in the shoot apex, at the sites of leaf formation, and in emerging leaves. Highly expressed in rapidly developing tissues.

The protein localises to the cytoplasm. It localises to the nucleus. In terms of biological role, specifically recognizes and binds N6-methyladenosine (m6A)-containing RNAs, and regulates mRNA stability. M6A is a modification present at internal sites of mRNAs and some non-coding RNAs and plays a role in mRNA stability and processing. Binds preferentially in the 3'UTRs of target genes. May play dual roles in regulating 3'UTR processing in the nucleus and facilitating mRNA stability in the cytoplasm. Required for the correct timing of leaf formation and normal leaf morphology. Functions redundantly with ECT3. Required for proper trichome branching and morphology. Controls trichome morphology by binding transcripts related to trichome morphogenesis and affecting their stability. The sequence is that of YTH domain-containing protein ECT2 from Arabidopsis thaliana (Mouse-ear cress).